The chain runs to 180 residues: Large ribosomal subunit protein uL6 (180 aa).

It belongs to the universal ribosomal protein uL6 family. Part of the 50S ribosomal subunit.

Functionally, this protein binds to the 23S rRNA, and is important in its secondary structure. It is located near the subunit interface in the base of the L7/L12 stalk, and near the tRNA binding site of the peptidyltransferase center. The chain is Large ribosomal subunit protein uL6 from Clostridium kluyveri (strain NBRC 12016).